Here is a 766-residue protein sequence, read N- to C-terminus: Hypoxia-inducible factor 1-alpha (766 aa).

Positions 1–26 (MDTGVVPEKKSRVSSDRRKEKSRDAA) are disordered. The segment covering 7 to 26 (PEKKSRVSSDRRKEKSRDAA) has biased composition (basic and acidic residues). One can recognise a bHLH domain in the interval 17 to 70 (RRKEKSRDAARCRRGKESEVFYELAQELPLPHSVTSNLDKASIMRLAISYLHMR). 2 PAS domains span residues 82-159 (EERE…TSKK) and 230-300 (PHPS…FAKG). Positions 304–347 (TGQYRMLAKRGGFVWVETQATVIYNNKNSQPQCVVCVNYVLSGI) constitute a PAC domain. The segment at 361–383 (DMRPVKKELEEEESSEPEVSPVL) is disordered. Pro426 is subject to 4-hydroxyproline. The interval 475-509 (DQHLVPNTSVDTTEVSTGPDSSSTPGSHSFTEPDS) is disordered. The span at 479-489 (VPNTSVDTTEV) shows a compositional bias: polar residues. Residues 490 to 503 (STGPDSSSTPGSHS) are compositionally biased toward low complexity. Pro559 is subject to 4-hydroxyproline. The Nuclear localization signal signature appears at 718 to 721 (LLGI). (3S)-3-hydroxyasparagine is present on Asn743.

As to quaternary structure, efficient DNA binding requires heterodimerization of an alpha and a beta/ARNT subunit. Post-translationally, in normoxia, is hydroxylated on Pro-426 and Pro-559. The hydroxylated prolines promote interaction with VHL, initiating rapid ubiquitination and subsequent proteasomal degradation. Under hypoxia, proline hydroxylation is impaired and ubiquitination is attenuated, resulting in stabilization. In normoxia, is hydroxylated on Asn-743, thus abrogating interaction with CREBBP and EP300 and preventing transcriptional activation. In terms of processing, the iron and 2-oxoglutarate dependent 3-hydroxylation of asparagine is (S) stereospecific within HIF CTAD domains.

Its subcellular location is the cytoplasm. The protein localises to the nucleus. The protein resides in the nucleus speckle. Induced by reactive oxygen species (ROS). Functionally, functions as a master transcriptional regulator of the adaptive response to hypoxia. Under hypoxic conditions, activates the transcription of over 40 genes, including erythropoietin, glucose transporters, glycolytic enzymes, vascular endothelial growth factor, HILPDA, and other genes whose protein products increase oxygen delivery or facilitate metabolic adaptation to hypoxia. Plays an essential role in embryonic vascularization, tumor angiogenesis and pathophysiology of ischemic disease. This chain is Hypoxia-inducible factor 1-alpha (hif1a), found in Oncorhynchus mykiss (Rainbow trout).